Consider the following 101-residue polypeptide: Large ribosomal subunit protein uL24 (101 aa).

It belongs to the universal ribosomal protein uL24 family. As to quaternary structure, part of the 50S ribosomal subunit.

Its function is as follows. One of two assembly initiator proteins, it binds directly to the 5'-end of the 23S rRNA, where it nucleates assembly of the 50S subunit. One of the proteins that surrounds the polypeptide exit tunnel on the outside of the subunit. The polypeptide is Large ribosomal subunit protein uL24 (Cereibacter sphaeroides (strain ATCC 17029 / ATH 2.4.9) (Rhodobacter sphaeroides)).